Consider the following 287-residue polypeptide: Phosphoribosylaminoimidazole-succinocarboxamide synthase (287 aa).

It belongs to the SAICAR synthetase family.

The catalysed reaction is 5-amino-1-(5-phospho-D-ribosyl)imidazole-4-carboxylate + L-aspartate + ATP = (2S)-2-[5-amino-1-(5-phospho-beta-D-ribosyl)imidazole-4-carboxamido]succinate + ADP + phosphate + 2 H(+). Its pathway is purine metabolism; IMP biosynthesis via de novo pathway; 5-amino-1-(5-phospho-D-ribosyl)imidazole-4-carboxamide from 5-amino-1-(5-phospho-D-ribosyl)imidazole-4-carboxylate: step 1/2. In Neisseria meningitidis serogroup B (strain ATCC BAA-335 / MC58), this protein is Phosphoribosylaminoimidazole-succinocarboxamide synthase.